The chain runs to 249 residues: Triosephosphate isomerase (249 aa).

Asn12 and Lys14 together coordinate substrate. Lys14 carries the post-translational modification N6-acetyllysine. Ser21 bears the Phosphoserine mark. A 3'-nitrotyrosine modification is found at Tyr68. Residue Ser80 is modified to Phosphoserine. His96 acts as the Electrophile in catalysis. Ser106 is modified (phosphoserine). Lys142 participates in a covalent cross-link: Glycyl lysine isopeptide (Lys-Gly) (interchain with G-Cter in SUMO1). An N6-succinyllysine modification is found at Lys149. The residue at position 156 (Lys156) is an N6-acetyllysine; alternate. Position 156 is an N6-succinyllysine; alternate (Lys156). Ser159 is modified (phosphoserine). Glu166 acts as the Proton acceptor in catalysis. Thr173 carries the post-translational modification Phosphothreonine. N6-acetyllysine; alternate is present on Lys194. At Lys194 the chain carries N6-succinyllysine; alternate. Residue Lys194 is modified to N6-methyllysine; alternate. Position 198 is a phosphoserine (Ser198). 3'-nitrotyrosine is present on Tyr209. The residue at position 212 (Ser212) is a Phosphoserine. Thr214 is modified (phosphothreonine). At Ser223 the chain carries Phosphoserine. Lys238 carries the post-translational modification N6-acetyllysine.

This sequence belongs to the triosephosphate isomerase family. In terms of assembly, homodimer.

It is found in the cytoplasm. It carries out the reaction D-glyceraldehyde 3-phosphate = dihydroxyacetone phosphate. It catalyses the reaction dihydroxyacetone phosphate = methylglyoxal + phosphate. The protein operates within carbohydrate degradation; glycolysis; D-glyceraldehyde 3-phosphate from glycerone phosphate: step 1/1. It participates in carbohydrate biosynthesis; gluconeogenesis. Its function is as follows. Triosephosphate isomerase is an extremely efficient metabolic enzyme that catalyzes the interconversion between dihydroxyacetone phosphate (DHAP) and D-glyceraldehyde-3-phosphate (G3P) in glycolysis and gluconeogenesis. Functionally, it is also responsible for the non-negligible production of methylglyoxal a reactive cytotoxic side-product that modifies and can alter proteins, DNA and lipids. In Homo sapiens (Human), this protein is Triosephosphate isomerase (TPI1).